The following is a 372-amino-acid chain: N-methyl-L-tryptophan oxidase (372 aa).

4–34 (DLIIIGSGSVGAAAGYYATRAGLNVLMTDAH) provides a ligand contact to FAD. An S-8alpha-FAD cysteine modification is found at C308.

The protein belongs to the MSOX/MTOX family. MTOX subfamily. Monomer. Requires FAD as cofactor.

The enzyme catalyses N(alpha)-methyl-L-tryptophan + O2 + H2O = L-tryptophan + formaldehyde + H2O2. Functionally, catalyzes the oxidative demethylation of N-methyl-L-tryptophan. This chain is N-methyl-L-tryptophan oxidase, found in Escherichia coli (strain SMS-3-5 / SECEC).